A 242-amino-acid chain; its full sequence is UPF0246 protein SSA_1395 (242 aa).

The protein belongs to the UPF0246 family.

This chain is UPF0246 protein SSA_1395, found in Streptococcus sanguinis (strain SK36).